The primary structure comprises 416 residues: Lipid phosphate phosphatase delta (416 aa).

The next 2 membrane-spanning stretches (helical) occupy residues 72-92 (FFSG…LPLL) and 104-124 (MTLL…VVSA). Residues 119-127 (KDVVSAPRP) form a phosphatase sequence motif I region. Residues 151 to 154 (PSSH) form a phosphatase sequence motif II region. Histidine 154 (proton donor) is an active-site residue. A helical transmembrane segment spans residues 178 to 198 (VSIQYYGFALACLLVALIAFG). The phosphatase sequence motif III stretch occupies residues 198-209 (GRVYLGMHSVVD). Residue histidine 205 is the Nucleophile of the active site. 5 helical membrane-spanning segments follow: residues 207 to 227 (VVDI…WLTV), 241 to 261 (VSSF…TPEH), 266 to 286 (YEYH…VQQT), 302 to 322 (ELPI…ILLV), and 393 to 413 (FFQY…LFSY).

This sequence belongs to the type 2 lipid phosphate phosphatase family.

It localises to the endoplasmic reticulum membrane. Functionally, functions as a sphingoid long-chain base phosphate (LCBP) phosphatase. May play a role in the regulation of LCBP levels and be involved in stomatal responses through LCBP-mediated ABA signaling. The chain is Lipid phosphate phosphatase delta (LPPD) from Arabidopsis thaliana (Mouse-ear cress).